A 301-amino-acid chain; its full sequence is Protoheme IX farnesyltransferase 1 (301 aa).

The next 9 helical transmembrane spans lie at 29–49, 51–71, 101–121, 123–143, 150–170, 177–197, 223–243, 244–264, and 281–301; these read VVAL…PTAV, VQPL…AAAL, ALIF…VLVN, LTAW…TAYL, NIVI…TAVT, ALLL…ALAI, CILL…LVGM, CGPM…YKAW, and FSIY…YLWS.

Belongs to the UbiA prenyltransferase family. Protoheme IX farnesyltransferase subfamily.

The protein localises to the cell inner membrane. The enzyme catalyses heme b + (2E,6E)-farnesyl diphosphate + H2O = Fe(II)-heme o + diphosphate. It functions in the pathway porphyrin-containing compound metabolism; heme O biosynthesis; heme O from protoheme: step 1/1. Converts heme B (protoheme IX) to heme O by substitution of the vinyl group on carbon 2 of heme B porphyrin ring with a hydroxyethyl farnesyl side group. This is Protoheme IX farnesyltransferase 1 from Shewanella putrefaciens (strain CN-32 / ATCC BAA-453).